An 89-amino-acid chain; its full sequence is MIRLETILTPGRSLVNVPGGSKKRALEKVATVIADQVPELEMQDVFEKLVAREKLGSTGFGNGIAIPHCRLEGSSAPVSALLHLEAPID.

The region spanning 6–89 (TILTPGRSLV…ALLHLEAPID (84 aa)) is the PTS EIIA type-2 domain. Residue H68 is the Tele-phosphohistidine intermediate of the active site.

Its subcellular location is the cytoplasm. Seems to have a role in regulating nitrogen assimilation. In Pseudomonas putida (Arthrobacter siderocapsulatus), this protein is Nitrogen regulatory protein (ptsN).